Reading from the N-terminus, the 269-residue chain is Pertussis toxin subunit 1 (269 aa).

The first 34 residues, 1-34 (MRCTRAIRQTARTGWLTWLAILAVTAPVTSPAWA), serve as a signal peptide directing secretion. NAD(+) is bound at residue tryptophan 60. Active-site residues include histidine 69 and glutamate 163. The cysteines at positions 75 and 235 are disulfide-linked.

This sequence belongs to the bacterial exotoxin subunit A family. Pertussis toxin contains five different chains, S1-S5. They are organized into 2 functional subunits: A, composed of S1 (which is toxic) and B, containing S2, S3, S5, and two copies of S4 (B binds to the membrane receptors). Dimers of S2-S4 and S3-S4 are held together by S5.

It is found in the secreted. S1 is an NAD-dependent ADP-ribosyltransferase, which plays a crucial role in the pathogenesis of B.pertussis causing disruption of normal host cellular regulation. It catalyzes the ADP-ribosylation of a cysteine in the alpha subunit of host heterotrimeric G proteins. In the absence of G proteins it also catalyzes the cleavage of NAD(+) into ADP-ribose and nicotinamide. It irreversibly uncouples the G-alpha GTP-binding proteins from their membrane receptors. This chain is Pertussis toxin subunit 1 (ptxA), found in Bordetella pertussis (strain Tohama I / ATCC BAA-589 / NCTC 13251).